Reading from the N-terminus, the 394-residue chain is Phenylalanine 4-monooxygenase, chloroplastic (394 aa).

A chloroplast-targeting transit peptide spans 1–79; it reads MAMEVGYLRH…LNQIQAVSTA (79 aa). A disordered region spans residues 75–97; sequence AVSTAEKEREADKTSTPPIPSSI. Residues H252, H257, and E297 each contribute to the Fe cation site.

Belongs to the biopterin-dependent aromatic amino acid hydroxylase family. As to quaternary structure, forms monomers. The cofactor is Fe(2+).

The protein localises to the plastid. The protein resides in the chloroplast. The enzyme catalyses (6R)-L-erythro-5,6,7,8-tetrahydrobiopterin + L-phenylalanine + O2 = (4aS,6R)-4a-hydroxy-L-erythro-5,6,7,8-tetrahydrobiopterin + L-tyrosine. Functionally, catalyzes the hydroxylation of L-phenylalanine to L-tyrosine. Does not seem to be tetrahydropterin-dependent and shows preference for 10-formyltetrahydrofolate as cosubstrate and electron donor. The polypeptide is Phenylalanine 4-monooxygenase, chloroplastic (Physcomitrium patens (Spreading-leaved earth moss)).